Reading from the N-terminus, the 437-residue chain is Gamma-glutamyl phosphate reductase (437 aa).

Belongs to the gamma-glutamyl phosphate reductase family.

It localises to the cytoplasm. The catalysed reaction is L-glutamate 5-semialdehyde + phosphate + NADP(+) = L-glutamyl 5-phosphate + NADPH + H(+). It participates in amino-acid biosynthesis; L-proline biosynthesis; L-glutamate 5-semialdehyde from L-glutamate: step 2/2. In terms of biological role, catalyzes the NADPH-dependent reduction of L-glutamate 5-phosphate into L-glutamate 5-semialdehyde and phosphate. The product spontaneously undergoes cyclization to form 1-pyrroline-5-carboxylate. In Synechococcus sp. (strain CC9902), this protein is Gamma-glutamyl phosphate reductase.